Consider the following 356-residue polypeptide: Sorbitol dehydrogenase (356 aa).

Cysteine 44 contributes to the Zn(2+) binding site. Residue tyrosine 50 participates in substrate binding. Residues histidine 69 and glutamate 70 each coordinate Zn(2+). Glutamate 155 contributes to the substrate binding site. NAD(+) contacts are provided by isoleucine 183, aspartate 203, and arginine 208. A phosphoserine mark is found at serine 210 and serine 224. Residues 272-274 (VGL) and 296-298 (VFR) each bind NAD(+). Substrate is bound by residues arginine 298 and tyrosine 299.

The protein belongs to the zinc-containing alcohol dehydrogenase family. As to quaternary structure, homotetramer. Zn(2+) is required as a cofactor. Expressed in lens.

It is found in the mitochondrion membrane. The protein resides in the cell projection. The protein localises to the cilium. Its subcellular location is the flagellum. The catalysed reaction is xylitol + NAD(+) = D-xylulose + NADH + H(+). It catalyses the reaction keto-D-fructose + NADH + H(+) = D-sorbitol + NAD(+). The enzyme catalyses L-iditol + NAD(+) = keto-L-sorbose + NADH + H(+). Inhibited in vitro by metal chelators such as EDTA and 1,10-phenanthroline. Functionally, polyol dehydrogenase that catalyzes the reversible NAD(+)-dependent oxidation of various sugar alcohols. Is mostly active with xylitol, D-sorbitol (D-glucitol) and L-iditol as substrates, leading to the C2-oxidized products D-xylulose, D-fructose and L-sorbose, respectively. Is a key enzyme in the polyol pathway that interconverts glucose and fructose via sorbitol, which constitutes an important alternate route for glucose metabolism. May play a role in sperm motility by using sorbitol as an alternative energy source for sperm motility. Cannot use NADP(+) as the electron acceptor. Has no activity on ethanol, methanol, glycerol, galactitol and fructose 6-phosphate. The polypeptide is Sorbitol dehydrogenase (SORD) (Bos taurus (Bovine)).